A 519-amino-acid chain; its full sequence is B3 domain-containing protein Os03g0620400 (519 aa).

The TF-B3 1 DNA-binding region spans 26–119 (MKCFHLQMSA…RFEVLILDSD (94 aa)). Residues 138 to 218 (ERNAAPVDIS…DPQMPPGRNY (81 aa)) form a disordered region. The span at 189–209 (SGEEGTDSSTSEDESSYELDD) shows a compositional bias: acidic residues. 2 DNA-binding regions (TF-B3) span residues 249–349 (VAIM…LRET) and 416–516 (YVSI…IRRN).

The protein resides in the nucleus. This Oryza sativa subsp. japonica (Rice) protein is B3 domain-containing protein Os03g0620400.